Consider the following 46-residue polypeptide: U-limacoditoxin(6)-Dv61 (46 aa).

An N-terminal signal peptide occupies residues 1–19 (MSKLLVLLMTTALATLAQA).

The protein belongs to the limacoditoxin-6 family. In terms of tissue distribution, expressed by the venom secretory cell of the spine. The spine is a cuticular structure containing a single large nucleated venom-secreting cell at its base. It is an independent unit capable of producing, storing and injecting venom. On the back of D.vulnerans caterpillars, spines are grouped together by 50 to 100 to form scoli, of which there are eight in D.vulnerans.

Its subcellular location is the secreted. Its function is as follows. Probable toxin. Does not show insecticidal, antimicrobial and antiparasitic activities. Does not induce increase in intracellular calcium in mouse DRG neurons, suggesting that it does not induce pain. This is U-limacoditoxin(6)-Dv61 from Doratifera vulnerans (Mottled cup moth).